Reading from the N-terminus, the 228-residue chain is Chaperone protein FanE (228 aa).

The first 19 residues, 1 to 19 (MNKFISIIALCVFSSYANA), serve as a signal peptide directing secretion. Cys-157 and Cys-198 are joined by a disulfide.

It belongs to the periplasmic pilus chaperone family.

Its subcellular location is the periplasm. In terms of biological role, mediates assembly of pili by forming soluble multimeric complexes with pili subunits as an intermediate step in the assembly process. This protein is involved in K99 pili assembly. The polypeptide is Chaperone protein FanE (fanE) (Escherichia coli).